Reading from the N-terminus, the 144-residue chain is Deoxyuridine 5'-triphosphate nucleotidohydrolase (144 aa).

Substrate-binding positions include 63 to 65, Asn76, 80 to 82, and Lys90; these read RSG and TID.

This sequence belongs to the dUTPase family. It depends on Mg(2+) as a cofactor.

It catalyses the reaction dUTP + H2O = dUMP + diphosphate + H(+). It participates in pyrimidine metabolism; dUMP biosynthesis; dUMP from dCTP (dUTP route): step 2/2. Its function is as follows. This enzyme is involved in nucleotide metabolism: it produces dUMP, the immediate precursor of thymidine nucleotides and it decreases the intracellular concentration of dUTP so that uracil cannot be incorporated into DNA. The sequence is that of Deoxyuridine 5'-triphosphate nucleotidohydrolase from Hydrogenobaculum sp. (strain Y04AAS1).